The sequence spans 299 residues: Tyrosine recombinase XerC (299 aa).

Positions 1-81 (MDEAIRRFIE…SWRQFYHWLQ (81 aa)) constitute a Core-binding (CB) domain. In terms of domain architecture, Tyr recombinase spans 102–281 (LLPKALPVDG…DFQHLAKVYD (180 aa)). Active-site residues include R142, K166, H233, R236, and H259. The active-site O-(3'-phospho-DNA)-tyrosine intermediate is the Y268.

Belongs to the 'phage' integrase family. XerC subfamily. In terms of assembly, forms a cyclic heterotetrameric complex composed of two molecules of XerC and two molecules of XerD.

It is found in the cytoplasm. Site-specific tyrosine recombinase, which acts by catalyzing the cutting and rejoining of the recombining DNA molecules. The XerC-XerD complex is essential to convert dimers of the bacterial chromosome into monomers to permit their segregation at cell division. It also contributes to the segregational stability of plasmids. This Chromobacterium violaceum (strain ATCC 12472 / DSM 30191 / JCM 1249 / CCUG 213 / NBRC 12614 / NCIMB 9131 / NCTC 9757 / MK) protein is Tyrosine recombinase XerC.